A 264-amino-acid polypeptide reads, in one-letter code: MHSLLGLLLVFAGSTFALYLLSTRLPRASTLVSAEESGDRSLWFPSDLAELRELSEVLREYRKEHQVYVFLLFCSAYLYKQSFAIPGSSFLNVLAGALFGPWLGLLLCCVLTSVGATGCYLLSSVFGKQLVVFYFPDKVALLQKKVEENRNGLFFFLLFLRLFPMTPNWFLNLSAPILNIPIVQFFFSVLIGLIPYNFICVQTGSILSTLTSLDALFSWETAFKLLAIALVALVPGTLIKKFSQKDLRLKETSNTHSLNSRKVT.

Residues 1 to 17 (MHSLLGLLLVFAGSTFA) form the signal peptide. 5 helical membrane passes run 67-87 (VYVFLLFCSAYLYKQSFAIPG), 90-110 (FLNVLAGALFGPWLGLLLCCV), 153-173 (LFFFLLFLRLFPMTPNWFLNL), 175-195 (APILNIPIVQFFFSVLIGLIP), and 219-239 (WETAFKLLAIALVALVPGTLI). The interval 96–207 (GALFGPWLGL…FICVQTGSIL (112 aa)) is VTT domain.

It belongs to the TMEM41 family.

Its subcellular location is the membrane. The protein is Transmembrane protein 41A (TMEM41A) of Bos taurus (Bovine).